Reading from the N-terminus, the 536-residue chain is Chaperonin GroEL (536 aa).

ATP contacts are provided by residues 29–32 (TLGP), 86–90 (DGTTT), Gly-413, and Asp-494.

Belongs to the chaperonin (HSP60) family. As to quaternary structure, forms a cylinder of 14 subunits composed of two heptameric rings stacked back-to-back. Interacts with the co-chaperonin GroES.

It localises to the cytoplasm. It catalyses the reaction ATP + H2O + a folded polypeptide = ADP + phosphate + an unfolded polypeptide.. Functionally, together with its co-chaperonin GroES, plays an essential role in assisting protein folding. The GroEL-GroES system forms a nano-cage that allows encapsulation of the non-native substrate proteins and provides a physical environment optimized to promote and accelerate protein folding. In Acholeplasma laidlawii (strain PG-8A), this protein is Chaperonin GroEL.